Here is a 145-residue protein sequence, read N- to C-terminus: Leghemoglobin (145 aa).

The Globin domain maps to 3–145 (GFTEKQEALV…ELAAALKKAF (143 aa)). Residues tyrosine 26 and tyrosine 31 each carry the nitrated tyrosine modification. Histidine 62 contacts O2. Residues lysine 65, histidine 93, and lysine 96 each coordinate heme b. At tyrosine 134 the chain carries Nitrated tyrosine.

This sequence belongs to the plant globin family. In terms of assembly, monomer. Nitrated in effective nodules and particularly in hypoxic conditions; this mechanism may play a protective role in the symbiosis by buffering toxic peroxynitrite NO(2)(-). Nitration level decrease during nodule senescence. Root nodules.

Its subcellular location is the cytoplasm. The protein resides in the cytosol. The protein localises to the nucleus. Leghemoglobin that reversibly binds oxygen O(2) through a pentacoordinated heme iron. In root nodules, facilitates the diffusion of oxygen to the bacteroids while preventing the bacterial nitrogenase from being inactivated by buffering dioxygen, nitric oxide and carbon monoxide, and promoting the formation of reactive oxygen species (ROS, e.g. H(2)O(2)). This role is essential for symbiotic nitrogen fixation (SNF). The protein is Leghemoglobin of Psophocarpus tetragonolobus (Winged bean).